Consider the following 482-residue polypeptide: MKFIVKPHPEIFVKSESVRKRFTKILECNIRNIVKSRTESVAVFNRRDHIEVTSESDEFHAEVLEILTHTPGIRHVLEVKQTEFKDLHDIYEQVLELSGSLIEGKTFAVRAKRRGKHDFTSIELERYVGGGLNQAVESARVKLSKPDVTINVEVTNDRLNQVLASHKGLGGFPLGTQEDVLSLISGGFDSGVSSYLHIKRGSKVHYCFFNLGGPAHEIGVKQVSHYLWNKYGSSAKVRFISVDFEPVVAEILEKVDDGQMGVILKRMFMRAAGMIAQKMKIEALVTGEALGQVSSQTLTNLRHIDNVTDTLILRPLINWDKEDIVNLAREIGTEDFAKTMPEYCGVISKKPTVKAVKGKLEAEEQKFDFSILEQVVQDARMTDIRDIAKESKQAAPEVEQVQAVEEHAIVLDIRSPEEEDDNSLEIDGVEVKHIPFYKLGTQFGDLDQAKTYLLYCDRGVMSRLQALYLQEQGFNNVKVYRP.

The 105-residue stretch at 61–165 (AEVLEILTHT…NDRLNQVLAS (105 aa)) folds into the THUMP domain. ATP is bound by residues 183–184 (LI), K265, G287, and Q296. C344 and C456 are oxidised to a cystine. One can recognise a Rhodanese domain in the interval 404 to 482 (VEEHAIVLDI…GFNNVKVYRP (79 aa)). C456 serves as the catalytic Cysteine persulfide intermediate.

This sequence belongs to the ThiI family.

It is found in the cytoplasm. The catalysed reaction is [ThiI sulfur-carrier protein]-S-sulfanyl-L-cysteine + a uridine in tRNA + 2 reduced [2Fe-2S]-[ferredoxin] + ATP + H(+) = [ThiI sulfur-carrier protein]-L-cysteine + a 4-thiouridine in tRNA + 2 oxidized [2Fe-2S]-[ferredoxin] + AMP + diphosphate. It carries out the reaction [ThiS sulfur-carrier protein]-C-terminal Gly-Gly-AMP + S-sulfanyl-L-cysteinyl-[cysteine desulfurase] + AH2 = [ThiS sulfur-carrier protein]-C-terminal-Gly-aminoethanethioate + L-cysteinyl-[cysteine desulfurase] + A + AMP + 2 H(+). Its pathway is cofactor biosynthesis; thiamine diphosphate biosynthesis. Its function is as follows. Catalyzes the ATP-dependent transfer of a sulfur to tRNA to produce 4-thiouridine in position 8 of tRNAs, which functions as a near-UV photosensor. Also catalyzes the transfer of sulfur to the sulfur carrier protein ThiS, forming ThiS-thiocarboxylate. This is a step in the synthesis of thiazole, in the thiamine biosynthesis pathway. The sulfur is donated as persulfide by IscS. The sequence is that of tRNA sulfurtransferase from Vibrio campbellii (strain ATCC BAA-1116).